A 264-amino-acid polypeptide reads, in one-letter code: Acetylglutamate kinase (264 aa).

Substrate contacts are provided by residues 40-41, arginine 62, and asparagine 158; that span reads GG.

Belongs to the acetylglutamate kinase family. ArgB subfamily.

It localises to the cytoplasm. It carries out the reaction N-acetyl-L-glutamate + ATP = N-acetyl-L-glutamyl 5-phosphate + ADP. It functions in the pathway amino-acid biosynthesis; L-arginine biosynthesis; N(2)-acetyl-L-ornithine from L-glutamate: step 2/4. In terms of biological role, catalyzes the ATP-dependent phosphorylation of N-acetyl-L-glutamate. The sequence is that of Acetylglutamate kinase from Cytophaga hutchinsonii (strain ATCC 33406 / DSM 1761 / CIP 103989 / NBRC 15051 / NCIMB 9469 / D465).